The sequence spans 678 residues: Protein KHNYN (678 aa).

S10 is subject to Phosphoserine. Disordered regions lie at residues 222 to 251 (QGVR…ARGD) and 347 to 407 (LHNG…ARGG). A compositionally biased stretch (pro residues) spans 355-367 (PRVPSPPPAPEPP). Phosphoserine is present on S359. Residues 370-388 (CGDRGDCGDRGDVGDRGDK) show a composition bias toward basic and acidic residues. The region spanning 437–589 (LRHIVIDGSN…LGRNGPTLDE (153 aa)) is the RNase NYN domain. The disordered stretch occupies residues 595 to 633 (ARTQGSSKAQHPSRGFAEHGKQQQGREEEKGSGGIRKTR). Over residues 610-633 (FAEHGKQQQGREEEKGSGGIRKTR) the composition is skewed to basic and acidic residues.

The protein belongs to the N4BP1 family.

The chain is Protein KHNYN (KHNYN) from Homo sapiens (Human).